Here is a 61-residue protein sequence, read N- to C-terminus: MNPKLCMLLLVCLMAFYVIETVQAKLTGECPAELEKECLNRRCASPCCKNNKCHCGCGRKK.

A signal peptide spans 1–24 (MNPKLCMLLLVCLMAFYVIETVQA).

Belongs to the scoloptoxin-14 family. Post-translationally, contains 4 disulfide bonds. In terms of tissue distribution, expressed by the venom gland.

The protein localises to the secreted. In Scolopendra morsitans (Tanzanian blue ringleg centipede), this protein is U-scoloptoxin(14)-Sm1a.